The chain runs to 254 residues: MAAAAADKSTKERLLSTLDDLEVLSRELIEMLALSRSQKLPPPGEDTLILELLIQRDKEFQELMQTALEQGRVHQEMQSLEKEVEKRDSDIQQLQKQLKEAEHILATAVYQAKEKLKSIDKARKGSISSKEIIKYAHRISASNAVCAPLNWVPGDPRRPYPTDLEMRSGMLGNMSNMSTNGVNGHLPGDALAAGRLPDVLTPQYPWQSTDVSMGILPPHHGNDFGLEPPGHNKENEDDVEAMSTDSSSSSSDSD.

The stretch at 72–114 forms a coiled coil; sequence RVHQEMQSLEKEVEKRDSDIQQLQKQLKEAEHILATAVYQAKE. The interval 215 to 254 is disordered; that stretch reads ILPPHHGNDFGLEPPGHNKENEDDVEAMSTDSSSSSSDSD. Positions 243 to 254 are enriched in low complexity; the sequence is STDSSSSSSDSD.

Belongs to the Mediator complex subunit 4 family. In terms of assembly, component of the Mediator complex.

It localises to the nucleus. Component of the Mediator complex, a coactivator involved in the regulated transcription of nearly all RNA polymerase II-dependent genes. Mediator functions as a bridge to convey information from gene-specific regulatory proteins to the basal RNA polymerase II transcription machinery. Mediator is recruited to promoters by direct interactions with regulatory proteins and serves as a scaffold for the assembly of a functional preinitiation complex with RNA polymerase II and the general transcription factors. This is Mediator of RNA polymerase II transcription subunit 4 (med4) from Danio rerio (Zebrafish).